Consider the following 174-residue polypeptide: Large ribosomal subunit protein uL10 (174 aa).

It belongs to the universal ribosomal protein uL10 family. In terms of assembly, part of the ribosomal stalk of the 50S ribosomal subunit. The N-terminus interacts with L11 and the large rRNA to form the base of the stalk. The C-terminus forms an elongated spine to which L12 dimers bind in a sequential fashion forming a multimeric L10(L12)X complex.

Forms part of the ribosomal stalk, playing a central role in the interaction of the ribosome with GTP-bound translation factors. The chain is Large ribosomal subunit protein uL10 from Anaeromyxobacter dehalogenans (strain 2CP-1 / ATCC BAA-258).